The sequence spans 363 residues: Large ribosomal subunit protein uL4A (363 aa).

Phosphoserine is present on serine 87. Residues 280-363 (PENIISNADV…EKFLTVLHEN (84 aa)) form a C-terminal-extended nuclear localization signal region.

This sequence belongs to the universal ribosomal protein uL4 family. In terms of assembly, component of the large ribosomal subunit (LSU). Mature yeast ribosomes consist of a small (40S) and a large (60S) subunit. The 40S small subunit contains 1 molecule of ribosomal RNA (18S rRNA) and at least 33 different proteins. The large 60S subunit contains 3 rRNA molecules (25S, 5.8S and 5S rRNA) and at least 46 different proteins. uL4 is associated with the polypeptide exit tunnel. uL4 interacts with its chaperone ACL4 and the nuclear import receptor KAP104.

Its subcellular location is the cytoplasm. It localises to the nucleus. In terms of biological role, component of the ribosome, a large ribonucleoprotein complex responsible for the synthesis of proteins in the cell. The small ribosomal subunit (SSU) binds messenger RNAs (mRNAs) and translates the encoded message by selecting cognate aminoacyl-transfer RNA (tRNA) molecules. The large subunit (LSU) contains the ribosomal catalytic site termed the peptidyl transferase center (PTC), which catalyzes the formation of peptide bonds, thereby polymerizing the amino acids delivered by tRNAs into a polypeptide chain. The nascent polypeptides leave the ribosome through a tunnel in the LSU and interact with protein factors that function in enzymatic processing, targeting, and the membrane insertion of nascent chains at the exit of the ribosomal tunnel. uL4 participates in the regulation of the accumulation of its own mRNA. The chain is Large ribosomal subunit protein uL4A (rpl402) from Schizosaccharomyces pombe (strain 972 / ATCC 24843) (Fission yeast).